A 404-amino-acid chain; its full sequence is Argininosuccinate synthase (404 aa).

Residues 9–17 (AYSGGLDTS) and alanine 36 contribute to the ATP site. An L-citrulline-binding site is contributed by tyrosine 87. An ATP-binding site is contributed by glycine 117. Residues threonine 119, asparagine 123, and aspartate 124 each coordinate L-aspartate. An L-citrulline-binding site is contributed by asparagine 123. Residues arginine 127, serine 176, and glutamate 261 each coordinate L-citrulline.

It belongs to the argininosuccinate synthase family. Type 1 subfamily. Homotetramer.

The protein resides in the cytoplasm. It catalyses the reaction L-citrulline + L-aspartate + ATP = 2-(N(omega)-L-arginino)succinate + AMP + diphosphate + H(+). The protein operates within amino-acid biosynthesis; L-arginine biosynthesis; L-arginine from L-ornithine and carbamoyl phosphate: step 2/3. This is Argininosuccinate synthase from Burkholderia pseudomallei (strain K96243).